We begin with the raw amino-acid sequence, 303 residues long: Glutamate formimidoyltransferase (303 aa).

The active-site For formimidoyltransferase activity is the H81. Folate is bound at residue 164–172 (GPSVVGKAG).

It belongs to the formiminotransferase family.

Its subcellular location is the cytoplasm. It carries out the reaction (6S)-5-formyl-5,6,7,8-tetrahydrofolate + L-glutamate = N-formyl-L-glutamate + (6S)-5,6,7,8-tetrahydrofolate + H(+). The enzyme catalyses 5-formimidoyltetrahydrofolate + L-glutamate = N-formimidoyl-L-glutamate + (6S)-5,6,7,8-tetrahydrofolate. The catalysed reaction is (6S)-5-formyl-5,6,7,8-tetrahydrofolate + ATP = (6R)-5,10-methenyltetrahydrofolate + ADP + phosphate. It functions in the pathway amino-acid degradation; L-histidine degradation into L-glutamate; L-glutamate from N-formimidoyl-L-glutamate (transferase route): step 1/1. It participates in one-carbon metabolism; tetrahydrofolate interconversion. Catalyzes the transfer of the formyl group from N-formylglutamate to tetrahydrofolate (THF) to yield 5-formyltetrahydrofolate (5-CHO-THF) and glutamate (Glu). The triglutamate form of 5-CHO-THF (5-CHO-THF-Glu3) can also be used as substrate. It can also catalyze the transfer of the formimino group from N-formiminoglutamate to tetrahydrofolate (THF) to yield 5-formiminotetrahydrofolate (5-NH=CH-THF) and glutamate (Glu). It can replace YgfA to catalyze the irreversible ATP-dependent transformation of 5-CHO-THF to form 5,10-methenyltetrahydrofolate (5,10-CH=THF). The chain is Glutamate formimidoyltransferase from Thermoplasma acidophilum (strain ATCC 25905 / DSM 1728 / JCM 9062 / NBRC 15155 / AMRC-C165).